Here is a 367-residue protein sequence, read N- to C-terminus: Beta sliding clamp (367 aa).

It belongs to the beta sliding clamp family. Forms a ring-shaped head-to-tail homodimer around DNA which binds and tethers DNA polymerases and other proteins to the DNA. The DNA replisome complex has a single clamp-loading complex (3 tau and 1 each of delta, delta', psi and chi subunits) which binds 3 Pol III cores (1 core on the leading strand and 2 on the lagging strand) each with a beta sliding clamp dimer. Additional proteins in the replisome are other copies of gamma, psi and chi, Ssb, DNA helicase and RNA primase.

Its subcellular location is the cytoplasm. Functionally, confers DNA tethering and processivity to DNA polymerases and other proteins. Acts as a clamp, forming a ring around DNA (a reaction catalyzed by the clamp-loading complex) which diffuses in an ATP-independent manner freely and bidirectionally along dsDNA. Initially characterized for its ability to contact the catalytic subunit of DNA polymerase III (Pol III), a complex, multichain enzyme responsible for most of the replicative synthesis in bacteria; Pol III exhibits 3'-5' exonuclease proofreading activity. The beta chain is required for initiation of replication as well as for processivity of DNA replication. The protein is Beta sliding clamp (dnaN) of Pseudomonas putida (strain ATCC 47054 / DSM 6125 / CFBP 8728 / NCIMB 11950 / KT2440).